A 300-amino-acid polypeptide reads, in one-letter code: Large ribosomal subunit protein bL9m (300 aa).

It belongs to the bacterial ribosomal protein bL9 family. Component of the mitochondrial large ribosomal subunit (mt-LSU). Mature N.crassa 74S mitochondrial ribosomes consist of a small (37S) and a large (54S) subunit. The 37S small subunit contains a 16S ribosomal RNA (16S mt-rRNA) and 32 different proteins. The 54S large subunit contains a 23S rRNA (23S mt-rRNA) and 42 different proteins.

It is found in the mitochondrion. Component of the mitochondrial ribosome (mitoribosome), a dedicated translation machinery responsible for the synthesis of mitochondrial genome-encoded proteins, including at least some of the essential transmembrane subunits of the mitochondrial respiratory chain. The mitoribosomes are attached to the mitochondrial inner membrane and translation products are cotranslationally integrated into the membrane. The protein is Large ribosomal subunit protein bL9m (mrpl50) of Neurospora crassa (strain ATCC 24698 / 74-OR23-1A / CBS 708.71 / DSM 1257 / FGSC 987).